Consider the following 436-residue polypeptide: GTPase Der (436 aa).

2 EngA-type G domains span residues 4-167 (PVIA…PKIE) and 176-351 (IRFS…ESHS). GTP contacts are provided by residues 10–17 (GRPNVGKS), 57–61 (DTGGI), 119–122 (NKVD), 182–189 (GRPNVGKS), 229–233 (DTAGM), and 294–297 (NKWD). The 85-residue stretch at 352–436 (IRVQTNVLND…PIHIIARARD (85 aa)) folds into the KH-like domain.

Belongs to the TRAFAC class TrmE-Era-EngA-EngB-Septin-like GTPase superfamily. EngA (Der) GTPase family. Associates with the 50S ribosomal subunit.

GTPase that plays an essential role in the late steps of ribosome biogenesis. This chain is GTPase Der, found in Bacillus cereus (strain G9842).